A 331-amino-acid chain; its full sequence is MNLDTTTIDSIVAQAEVAIAQASDPTALDQVRVNFLGKKGLFTEQMKGLGKLPKEEKPKMGQVINIAKQAVQKLLTERGELLRAQEIKEKLAAESIDVTLPGRGTQIGGLHPVTRTIARIESFFGDLGFEVKDGPEVEDDYHNFDALNIPEHHPARQDHDTFYFNPKLVLRTQTSGVQIRTMEVEQPPLRIISPGKVYRNDYDQTHTPMFHQVEGLMVDKDVSFTHLKGILHDFLHHFFEEEVEIRFRPSYFPFTEPSAEVDIMGKNGKWLEVLGCGMVHPNVLRSVGIDPEVYTGFAFGMGVERLTMLRYGVNDLRAFFENDLRFLKQFK.

Glutamate 256 is a binding site for Mg(2+).

This sequence belongs to the class-II aminoacyl-tRNA synthetase family. Phe-tRNA synthetase alpha subunit type 1 subfamily. As to quaternary structure, tetramer of two alpha and two beta subunits. It depends on Mg(2+) as a cofactor.

The protein localises to the cytoplasm. The enzyme catalyses tRNA(Phe) + L-phenylalanine + ATP = L-phenylalanyl-tRNA(Phe) + AMP + diphosphate + H(+). The sequence is that of Phenylalanine--tRNA ligase alpha subunit from Colwellia psychrerythraea (strain 34H / ATCC BAA-681) (Vibrio psychroerythus).